The following is a 338-amino-acid chain: tRNA-specific 2-thiouridylase MnmA (338 aa).

ATP contacts are provided by residues 6-13 (ALSGGVDS) and Met32. Residue Cys92 is the Nucleophile of the active site. A disulfide bond links Cys92 and Cys186. Residue Gly116 coordinates ATP. The interaction with tRNA stretch occupies residues 134-136 (KDQ). Cys186 functions as the Cysteine persulfide intermediate in the catalytic mechanism. Residues 288–289 (RY) are interaction with tRNA.

Belongs to the MnmA/TRMU family.

It localises to the cytoplasm. The enzyme catalyses S-sulfanyl-L-cysteinyl-[protein] + uridine(34) in tRNA + AH2 + ATP = 2-thiouridine(34) in tRNA + L-cysteinyl-[protein] + A + AMP + diphosphate + H(+). Catalyzes the 2-thiolation of uridine at the wobble position (U34) of tRNA, leading to the formation of s(2)U34. The chain is tRNA-specific 2-thiouridylase MnmA from Campylobacter fetus subsp. fetus (strain 82-40).